The following is a 277-amino-acid chain: 3-methyl-2-oxobutanoate hydroxymethyltransferase (277 aa).

Mg(2+) is bound by residues D53 and D96. Residues 53–54, D96, and K126 each bind 3-methyl-2-oxobutanoate; that span reads DS. E128 contributes to the Mg(2+) binding site. Residue E195 is the Proton acceptor of the active site.

The protein belongs to the PanB family. As to quaternary structure, homodecamer; pentamer of dimers. It depends on Mg(2+) as a cofactor.

It localises to the cytoplasm. The enzyme catalyses 3-methyl-2-oxobutanoate + (6R)-5,10-methylene-5,6,7,8-tetrahydrofolate + H2O = 2-dehydropantoate + (6S)-5,6,7,8-tetrahydrofolate. It participates in cofactor biosynthesis; (R)-pantothenate biosynthesis; (R)-pantoate from 3-methyl-2-oxobutanoate: step 1/2. In terms of biological role, catalyzes the reversible reaction in which hydroxymethyl group from 5,10-methylenetetrahydrofolate is transferred onto alpha-ketoisovalerate to form ketopantoate. In Chlorobaculum tepidum (strain ATCC 49652 / DSM 12025 / NBRC 103806 / TLS) (Chlorobium tepidum), this protein is 3-methyl-2-oxobutanoate hydroxymethyltransferase.